The following is a 178-amino-acid chain: Nucleoside-triphosphatase THEP1 (178 aa).

ATP contacts are provided by residues 7–14 (GEPGVGKT) and 102–109 (VIIIDEIG).

This sequence belongs to the THEP1 NTPase family. In terms of assembly, monomer.

The enzyme catalyses a ribonucleoside 5'-triphosphate + H2O = a ribonucleoside 5'-diphosphate + phosphate + H(+). Has nucleotide phosphatase activity towards ATP, GTP, CTP, TTP and UTP. May hydrolyze nucleoside diphosphates with lower efficiency. Does not have kinase activity. The polypeptide is Nucleoside-triphosphatase THEP1 (Aquifex aeolicus (strain VF5)).